The sequence spans 662 residues: Protein Aster-C (662 aa).

Positions 1-34 are disordered; sequence MEGAPTVRQVMNEGDSSLATELQEDVEENPSPTV. Residues 69–136 form the GRAM domain; that stretch reads EEYRRQFTHL…KNITFMTKEK (68 aa). Disordered stretches follow at residues 212 to 237 and 250 to 284; these read SIED…EKLS and VSET…LPTL. The span at 265–276 shows a compositional bias: basic and acidic residues; the sequence is LGKEESQNEKQT. In terms of domain architecture, VASt spans 326-497; sequence HGRLFINRIF…DLLIEESILN (172 aa). A helical transmembrane segment spans residues 557-577; that stretch reads LIVVMSIFVLLLVLLNVTLFL.

It localises to the endoplasmic reticulum membrane. The protein resides in the cell membrane. Its function is as follows. Cholesterol transporter that mediates non-vesicular transport of cholesterol from the plasma membrane (PM) to the endoplasmic reticulum (ER). Contains unique domains for binding cholesterol and the PM, thereby serving as a molecular bridge for the transfer of cholesterol from the PM to the ER. Plays a crucial role in cholesterol homeostasis and has the unique ability to localize to the PM based on the level of membrane cholesterol. In lipid-poor conditions localizes to the ER membrane and in response to excess cholesterol in the PM is recruited to the endoplasmic reticulum-plasma membrane contact sites (EPCS) which is mediated by the GRAM domain. At the EPCS, the sterol-binding VASt/ASTER domain binds to the cholesterol in the PM and facilitates its transfer from the PM to ER. The chain is Protein Aster-C (GRAMD1C) from Pongo abelii (Sumatran orangutan).